A 322-amino-acid polypeptide reads, in one-letter code: MNQMVDMGHAVPAARGLREARAFAPASVANVAVGFDLLGYPLDGVGDTVTVRRIDAPVVRIAAIRGTTVALPLEAERNTAGAALMSLRAALALPFGFELEIDKGIALSSGMGGSAASCVAALVAANALLDTPVSTDQLYQHALDGEAVASGSRHGDNLGPLFLGGLVLCTLERLVPIAVPEAWHSLVVHPEAVLETRRAREALAGDYRLSEFVAQSTNLALVLAGCHAGDADLVRAGLRDVLVEPRRAPLITGFAQAKQAALAHAALGASISGAGPSVFAWFETRAAAAAAAPAVQAAFAGVGLDSQAWVTPINSPAARLLA.

106 to 116 (ALSSGMGGSAA) contacts ATP.

Belongs to the GHMP kinase family. Homoserine kinase subfamily.

It localises to the cytoplasm. The enzyme catalyses L-homoserine + ATP = O-phospho-L-homoserine + ADP + H(+). It functions in the pathway amino-acid biosynthesis; L-threonine biosynthesis; L-threonine from L-aspartate: step 4/5. Functionally, catalyzes the ATP-dependent phosphorylation of L-homoserine to L-homoserine phosphate. The polypeptide is Homoserine kinase (Xanthomonas campestris pv. campestris (strain B100)).